Consider the following 144-residue polypeptide: Large ribosomal subunit protein uL15 (144 aa).

The interval Met1–Arg48 is disordered.

This sequence belongs to the universal ribosomal protein uL15 family. As to quaternary structure, part of the 50S ribosomal subunit.

In terms of biological role, binds to the 23S rRNA. This Chlamydia muridarum (strain MoPn / Nigg) protein is Large ribosomal subunit protein uL15.